A 178-amino-acid polypeptide reads, in one-letter code: Oligoribonuclease (178 aa).

Residues 7–168 form the Exonuclease domain; the sequence is LIWIDLEMTG…DDIRESIAEL (162 aa). Tyrosine 128 is a catalytic residue.

This sequence belongs to the oligoribonuclease family.

It is found in the cytoplasm. In terms of biological role, 3'-to-5' exoribonuclease specific for small oligoribonucleotides. This is Oligoribonuclease from Pseudomonas savastanoi pv. phaseolicola (strain 1448A / Race 6) (Pseudomonas syringae pv. phaseolicola (strain 1448A / Race 6)).